Here is a 226-residue protein sequence, read N- to C-terminus: MIQVISDVLTPDELKRFRELLGQAQWQDGRATAGHVAVRAKANEQLSHEDSLGQQLSEFLLERLGKISHFIAAALPLKVLPPRFNRYTGGGSYGDHIDNAIFSVPGAGVRIRGDLSATLFLSEPGDYDGGELIIQGEFARHQFKLPAGQMILYPASTFHQVTPVTRGARLAAFFWTQSLVREHSRRALLFELDNTIQALAQDNPEQPAVARLTGLYHNLLREWSET.

One can recognise a Fe2OG dioxygenase domain in the interval 78–178; that stretch reads KVLPPRFNRY…RLAAFFWTQS (101 aa). The Fe cation site is built by histidine 96, aspartate 98, and histidine 159. Arginine 169 serves as a coordination point for 2-oxoglutarate.

It depends on Fe(2+) as a cofactor. L-ascorbate is required as a cofactor.

In Nitrobacter winogradskyi (strain ATCC 25391 / DSM 10237 / CIP 104748 / NCIMB 11846 / Nb-255), this protein is PKHD-type hydroxylase Nwi_0701.